We begin with the raw amino-acid sequence, 20 residues long: Non-secretory ribonuclease (20 aa).

His16 (proton acceptor) is an active-site residue.

Belongs to the pancreatic ribonuclease family. Interacts with and forms a tight 1:1 complex with RNH1. Dimerization of two such complexes may occur.

The protein resides in the lysosome. The protein localises to the cytoplasmic granule. The enzyme catalyses an [RNA] containing cytidine + H2O = an [RNA]-3'-cytidine-3'-phosphate + a 5'-hydroxy-ribonucleotide-3'-[RNA].. It carries out the reaction an [RNA] containing uridine + H2O = an [RNA]-3'-uridine-3'-phosphate + a 5'-hydroxy-ribonucleotide-3'-[RNA].. In terms of biological role, this is a non-secretory ribonuclease. It is a pyrimidine specific nuclease with a slight preference for U. Cytotoxin and helminthotoxin. Possesses a wide variety of biological activities. In Sus scrofa (Pig), this protein is Non-secretory ribonuclease (RNASE2).